A 349-amino-acid polypeptide reads, in one-letter code: Probable esterase Cgl0839 (349 aa).

Residues 60–329 (GTHQTWFQQY…EDIAGHLGLF (270 aa)) form the AB hydrolase-1 domain. Residue S142 is the Nucleophile of the active site. Active-site residues include D296 and H325.

This sequence belongs to the AB hydrolase superfamily. Acetyl esterase family. In terms of assembly, homodimer.

Esterase that catalyzes the hydrolysis of 4-nitrophenyl acetate in vitro. The sequence is that of Probable esterase Cgl0839 from Corynebacterium glutamicum (strain ATCC 13032 / DSM 20300 / JCM 1318 / BCRC 11384 / CCUG 27702 / LMG 3730 / NBRC 12168 / NCIMB 10025 / NRRL B-2784 / 534).